Here is a 358-residue protein sequence, read N- to C-terminus: F-box protein At4g35733 (358 aa).

Residues 4 to 51 enclose the F-box domain; the sequence is ATVWSDLPGELLDHIANGLFSKVELLRFRSICKTFRSAVDSDKNFLDH.

In terms of assembly, part of a SCF (ASK-cullin-F-box) protein ligase complex.

It functions in the pathway protein modification; protein ubiquitination. Component of SCF(ASK-cullin-F-box) E3 ubiquitin ligase complexes, which may mediate the ubiquitination and subsequent proteasomal degradation of target proteins. This chain is F-box protein At4g35733, found in Arabidopsis thaliana (Mouse-ear cress).